The primary structure comprises 735 residues: E3 ubiquitin-protein ligase SH3RF2 (735 aa).

An RING-type zinc finger spans residues 12–53 (CPVCFEKLDVTAKVLPCQHTFCKPCLQRIFKAHKELRCPECR). SH3 domains follow at residues 125–184 (DGVP…VIKQ) and 187–252 (QPPP…PNLS). Disordered stretches follow at residues 260-301 (SKGH…GSGQ) and 335-373 (TSPS…STAM). Over residues 273–289 (LMSSPSRGKATNTSTLR) the composition is skewed to polar residues. Positions 373 to 466 (MVSVPSSQQH…RHPTVCTTWA (94 aa)) are interaction with PAK4. The region spanning 383–444 (LSTNMFVALH…PSDYVIPVFS (62 aa)) is the SH3 3 domain. 3 disordered regions span residues 472–534 (VSSQ…PVQS), 612–637 (ETPI…KPEN), and 649–735 (VRFQ…FPSK). Residues 523 to 534 (RKNGSLQRPVQS) show a composition bias toward polar residues. Residues 617–627 (SEPPPKPPASA) show a composition bias toward pro residues. An interaction with PPP1CA region spans residues 647–652 (KTVRFQ). Ser-655 is modified (phosphoserine). Positions 715–735 (FSKTTPPVSTASVSQTLFPSK) are enriched in polar residues.

This sequence belongs to the SH3RF family. Interacts with FASLG and PPP1CA. Interacts with PAK4 and TNFRSF1A. Interacts with DLK1, MAP3K10, MAPK8IP1/JIP1, MAPK8IP2/JIP2 and MAPK8IP3/JIP3. Interacts with RAC1 (both active GTP- or inactive GDP-bound forms). Post-translationally, autoubiquitinated.

It localises to the nucleus. It carries out the reaction S-ubiquitinyl-[E2 ubiquitin-conjugating enzyme]-L-cysteine + [acceptor protein]-L-lysine = [E2 ubiquitin-conjugating enzyme]-L-cysteine + N(6)-ubiquitinyl-[acceptor protein]-L-lysine.. It functions in the pathway protein modification; protein ubiquitination. Functionally, has E3 ubiquitin-protein ligase activity. Acts as an anti-apoptotic regulator of the JNK pathway by ubiquitinating and promoting the degradation of SH3RF1, a scaffold protein that is required for pro-apoptotic JNK activation. Facilitates TNF-alpha-mediated recruitment of adapter proteins TRADD and RIPK1 to TNFRSF1A and regulates PAK4 protein stability via inhibition of its ubiquitin-mediated proteasomal degradation. Inhibits PPP1CA phosphatase activity. The sequence is that of E3 ubiquitin-protein ligase SH3RF2 (Sh3rf2) from Rattus norvegicus (Rat).